Reading from the N-terminus, the 328-residue chain is Ribosomal RNA small subunit methyltransferase H (328 aa).

Residues 64 to 66 (GGH), D83, F112, D129, and Q136 each bind S-adenosyl-L-methionine.

The protein belongs to the methyltransferase superfamily. RsmH family.

The protein localises to the cytoplasm. The enzyme catalyses cytidine(1402) in 16S rRNA + S-adenosyl-L-methionine = N(4)-methylcytidine(1402) in 16S rRNA + S-adenosyl-L-homocysteine + H(+). In terms of biological role, specifically methylates the N4 position of cytidine in position 1402 (C1402) of 16S rRNA. The polypeptide is Ribosomal RNA small subunit methyltransferase H (Bdellovibrio bacteriovorus (strain ATCC 15356 / DSM 50701 / NCIMB 9529 / HD100)).